A 153-amino-acid polypeptide reads, in one-letter code: Aspartate carbamoyltransferase regulatory chain (153 aa).

The Zn(2+) site is built by Cys-110, Cys-115, Cys-138, and Cys-141.

Belongs to the PyrI family. As to quaternary structure, contains catalytic and regulatory chains. Requires Zn(2+) as cofactor.

Its function is as follows. Involved in allosteric regulation of aspartate carbamoyltransferase. This is Aspartate carbamoyltransferase regulatory chain from Bacteroides fragilis (strain ATCC 25285 / DSM 2151 / CCUG 4856 / JCM 11019 / LMG 10263 / NCTC 9343 / Onslow / VPI 2553 / EN-2).